The primary structure comprises 416 residues: Imidazolonepropionase (416 aa).

Fe(3+) contacts are provided by His-82 and His-84. The Zn(2+) site is built by His-82 and His-84. Arg-91, Tyr-154, and His-187 together coordinate 4-imidazolone-5-propanoate. Position 154 (Tyr-154) interacts with N-formimidoyl-L-glutamate. A Fe(3+)-binding site is contributed by His-252. His-252 is a Zn(2+) binding site. Residue Glu-255 participates in 4-imidazolone-5-propanoate binding. Fe(3+) is bound at residue Asp-326. Asp-326 is a binding site for Zn(2+). Positions 328 and 330 each coordinate N-formimidoyl-L-glutamate. Ser-331 lines the 4-imidazolone-5-propanoate pocket.

Belongs to the metallo-dependent hydrolases superfamily. HutI family. Zn(2+) serves as cofactor. Fe(3+) is required as a cofactor.

The protein resides in the cytoplasm. It carries out the reaction 4-imidazolone-5-propanoate + H2O = N-formimidoyl-L-glutamate. It participates in amino-acid degradation; L-histidine degradation into L-glutamate; N-formimidoyl-L-glutamate from L-histidine: step 3/3. In terms of biological role, catalyzes the hydrolytic cleavage of the carbon-nitrogen bond in imidazolone-5-propanoate to yield N-formimidoyl-L-glutamate. It is the third step in the universal histidine degradation pathway. The polypeptide is Imidazolonepropionase (Parabacteroides distasonis (strain ATCC 8503 / DSM 20701 / CIP 104284 / JCM 5825 / NCTC 11152)).